Here is a 31-residue protein sequence, read N- to C-terminus: MSTIISYFGFLLASIIFTLILFISLSKIQLI.

A helical membrane pass occupies residues 3–23 (TIISYFGFLLASIIFTLILFI).

The protein belongs to the PetL family. As to quaternary structure, the 4 large subunits of the cytochrome b6-f complex are cytochrome b6, subunit IV (17 kDa polypeptide, PetD), cytochrome f and the Rieske protein, while the 4 small subunits are PetG, PetL, PetM and PetN. The complex functions as a dimer.

It localises to the plastid. It is found in the chloroplast thylakoid membrane. Component of the cytochrome b6-f complex, which mediates electron transfer between photosystem II (PSII) and photosystem I (PSI), cyclic electron flow around PSI, and state transitions. PetL is important for photoautotrophic growth as well as for electron transfer efficiency and stability of the cytochrome b6-f complex. The protein is Cytochrome b6-f complex subunit 6 of Abies homolepis (Nikko fir).